Reading from the N-terminus, the 338-residue chain is Anthranilate phosphoribosyltransferase (338 aa).

Residues Gly-78, 81 to 82, Ser-86, 88 to 91, 106 to 114, and Ser-118 each bind 5-phospho-alpha-D-ribose 1-diphosphate; these read GD, NIST, and KHGNKSITS. Anthranilate is bound at residue Gly-78. Ser-90 lines the Mg(2+) pocket. An anthranilate-binding site is contributed by Asn-109. An anthranilate-binding site is contributed by Arg-163. Mg(2+)-binding residues include Asp-222 and Glu-223.

It belongs to the anthranilate phosphoribosyltransferase family. In terms of assembly, homodimer. The cofactor is Mg(2+).

It catalyses the reaction N-(5-phospho-beta-D-ribosyl)anthranilate + diphosphate = 5-phospho-alpha-D-ribose 1-diphosphate + anthranilate. It functions in the pathway amino-acid biosynthesis; L-tryptophan biosynthesis; L-tryptophan from chorismate: step 2/5. Its function is as follows. Catalyzes the transfer of the phosphoribosyl group of 5-phosphorylribose-1-pyrophosphate (PRPP) to anthranilate to yield N-(5'-phosphoribosyl)-anthranilate (PRA). The polypeptide is Anthranilate phosphoribosyltransferase (Staphylococcus carnosus (strain TM300)).